The chain runs to 122 residues: HLMQFETLIMKVAGRSGVWYYGSYGCFCGAGGQGRPQDASDRCCFVHDCCYGKVNGCDPKKDFYTYSEENGDIVCGGDDPCKKEICECDKDAAICFRDNKDTYDNKYWFFPAKNCQEESEPC.

7 disulfide bridges follow: cysteine 26–cysteine 115, cysteine 28–cysteine 44, cysteine 43–cysteine 95, cysteine 49–cysteine 122, cysteine 50–cysteine 88, cysteine 57–cysteine 81, and cysteine 75–cysteine 86. Ca(2+)-binding residues include phenylalanine 27, glycine 29, and glycine 31. Histidine 47 is an active-site residue. Residue aspartate 48 coordinates Ca(2+). Aspartate 89 is an active-site residue.

This sequence belongs to the phospholipase A2 family. Group II subfamily. D49 sub-subfamily. Ca(2+) is required as a cofactor. Expressed by the venom gland.

It is found in the secreted. The enzyme catalyses a 1,2-diacyl-sn-glycero-3-phosphocholine + H2O = a 1-acyl-sn-glycero-3-phosphocholine + a fatty acid + H(+). Functionally, snake venom phospholipase A2 (PLA2) that has high lipolytic activity. PLA2 catalyzes the calcium-dependent hydrolysis of the 2-acyl groups in 3-sn-phosphoglycerides. This chain is Acidic phospholipase A2 4, found in Craspedocephalus gramineus (Bamboo pit viper).